We begin with the raw amino-acid sequence, 697 residues long: Sodium-dependent phosphate transport protein 2B (697 aa).

Residues 1-45 (MAPWPELENAQPNPGKFIEGASGPQSSIPAKDKEASKTNDNGTPV) are disordered. The Cytoplasmic segment spans residues 1-91 (MAPWPELENA…WSERDTKGKT (91 aa)). A helical transmembrane segment spans residues 92–112 (LCIFQGVGKFILLLGFLYLFV). At 113–136 (CSLDVLSSAFQLVGGKVAGQFFSN) the chain is on the extracellular side. A helical membrane pass occupies residues 137–157 (NSIMSNPVAGLVIGVLVTVMV). The Cytoplasmic segment spans residues 158–213 (QSSSTSSSIIVSMVASSLLTVRAAIPIIMGANIGTSITNTIVALMQAGDRNEFRRA). A helical membrane pass occupies residues 214–234 (FAGATVHDFFNWLSVFVLLPL). Topologically, residues 235–363 (EAATHYLEIL…FVNFSLPDLA (129 aa)) are extracellular. 4 N-linked (GlcNAc...) asparagine glycosylation sites follow: Asn295, Asn308, Asn321, and Asn356. Cysteines 303 and 350 form a disulfide. A helical transmembrane segment spans residues 364–384 (VGIILLTVSLVVLCGCLIMIV). The Cytoplasmic segment spans residues 385–408 (KLLGSVLRGQVATVIKKTLNTDFP). A helical transmembrane segment spans residues 409 to 429 (FPFAWLTGYLAILVGAGMTFI). The Extracellular portion of the chain corresponds to 430–486 (VQSSSVFTSAMTPLIGIGVISIERAYPLTLGSNIGTTTTAILAALASPGNTLRSSLQ). A helical membrane pass occupies residues 487–507 (IALCHFFFNISGILLWYPIPF). The Cytoplasmic portion of the chain corresponds to 508 to 526 (TRLPIRLAKGLGNISAKYR). The helical transmembrane segment at 527 to 547 (WFAVFYLIFFFFVTPLTVFGL) threads the bilayer. The Extracellular segment spans residues 548–551 (SLAG). The helical transmembrane segment at 552–572 (WPVLVGVGVPIILLLLLVLCL) threads the bilayer. Over 573–696 (RMLQFRCPRI…SMKALSNTTV (124 aa)) the chain is Cytoplasmic.

The protein belongs to the SLC34A transporter family. As to expression, highly abundant in the ileum of small intestine, whereas it is almost absent in the duodenum and in the jejunum.

Its subcellular location is the apical cell membrane. The enzyme catalyses 3 Na(+)(out) + phosphate(out) = 3 Na(+)(in) + phosphate(in). Functionally, involved in actively transporting phosphate into cells via Na(+) cotransport. The chain is Sodium-dependent phosphate transport protein 2B (Slc34a2) from Mus musculus (Mouse).